A 54-amino-acid polypeptide reads, in one-letter code: Large ribosomal subunit protein uL15 (54 aa).

Positions 1-30 (MPSRLRXTRKLRGHVSHGHGRIGKHRKHPG) are enriched in basic residues. A disordered region spans residues 1 to 42 (MPSRLRXTRKLRGHVSHGHGRIGKHRKHPGGRGNAGGMHHHR). His-39 is modified ((3S)-3-hydroxyhistidine). Lys-47 carries the post-translational modification N6-acetyllysine.

This sequence belongs to the universal ribosomal protein uL15 family. As to quaternary structure, component of the large ribosomal subunit. Hydroxylated on His-39 by MINA.

The protein localises to the cytoplasm. Its function is as follows. Component of the large ribosomal subunit. The ribosome is a large ribonucleoprotein complex responsible for the synthesis of proteins in the cell. The sequence is that of Large ribosomal subunit protein uL15 (RPL27A) from Sus scrofa (Pig).